Consider the following 146-residue polypeptide: General odorant-binding protein 19a (146 aa).

Residues 1–22 (MKFHLLLVCVAISLGPIPQSEA) form the signal peptide. Intrachain disulfides connect C40/C72, C68/C126, and C113/C135.

The protein belongs to the PBP/GOBP family. In terms of tissue distribution, expressed in adult olfactory system. Expressed exclusively in a subset of chemosensory sensilla on the third antennal segment.

Its subcellular location is the secreted. Its function is as follows. Present in the aqueous fluid surrounding olfactory sensory dendrites and are thought to aid in the capture and transport of hydrophobic odorants into and through this fluid. The chain is General odorant-binding protein 19a (Obp19a) from Drosophila melanogaster (Fruit fly).